The primary structure comprises 162 residues: Non-specific lipid transfer protein GPI-anchored 27 (162 aa).

Positions 1 to 29 (MAYTNKVAVAVGAAVVFLAVVMNPRWTEA) are cleaved as a signal peptide. Disulfide bonds link cysteine 39-cysteine 78, cysteine 50-cysteine 62, cysteine 63-cysteine 102, and cysteine 76-cysteine 110. Asparagine 68 carries N-linked (GlcNAc...) asparagine glycosylation. Residues asparagine 124 and asparagine 135 are each glycosylated (N-linked (GlcNAc...) asparagine). A lipid anchor (GPI-anchor amidated serine) is attached at serine 137. Positions 138 to 162 (VGGKNKVATSMSAFGLVAILLFVMF) are cleaved as a propeptide — removed in mature form.

It belongs to the plant LTP family.

It is found in the cell membrane. In terms of biological role, probable lipid transfer protein. This is Non-specific lipid transfer protein GPI-anchored 27 from Arabidopsis thaliana (Mouse-ear cress).